Reading from the N-terminus, the 339-residue chain is Ketol-acid reductoisomerase (NADP(+)) (339 aa).

The KARI N-terminal Rossmann domain occupies 1 to 182 (MRVYYDRDAD…GGGRAGVIET (182 aa)). Residues 24-27 (YGSQ), Arg48, Ser51, Thr53, and 83-86 (DELQ) each bind NADP(+). Residue His108 is part of the active site. Gly134 is an NADP(+) binding site. A KARI C-terminal knotted domain is found at 183–328 (TFKEECETDL…KKLRSMMPWI (146 aa)). Mg(2+) contacts are provided by Asp191, Glu195, Glu227, and Glu231. Ser252 contacts substrate.

It belongs to the ketol-acid reductoisomerase family. Mg(2+) is required as a cofactor.

The catalysed reaction is (2R)-2,3-dihydroxy-3-methylbutanoate + NADP(+) = (2S)-2-acetolactate + NADPH + H(+). The enzyme catalyses (2R,3R)-2,3-dihydroxy-3-methylpentanoate + NADP(+) = (S)-2-ethyl-2-hydroxy-3-oxobutanoate + NADPH + H(+). It functions in the pathway amino-acid biosynthesis; L-isoleucine biosynthesis; L-isoleucine from 2-oxobutanoate: step 2/4. It participates in amino-acid biosynthesis; L-valine biosynthesis; L-valine from pyruvate: step 2/4. Functionally, involved in the biosynthesis of branched-chain amino acids (BCAA). Catalyzes an alkyl-migration followed by a ketol-acid reduction of (S)-2-acetolactate (S2AL) to yield (R)-2,3-dihydroxy-isovalerate. In the isomerase reaction, S2AL is rearranged via a Mg-dependent methyl migration to produce 3-hydroxy-3-methyl-2-ketobutyrate (HMKB). In the reductase reaction, this 2-ketoacid undergoes a metal-dependent reduction by NADPH to yield (R)-2,3-dihydroxy-isovalerate. The chain is Ketol-acid reductoisomerase (NADP(+)) from Bartonella tribocorum (strain CIP 105476 / IBS 506).